The following is a 238-amino-acid chain: Ribonuclease PH (238 aa).

Phosphate is bound by residues Arg86 and 124–126; that span reads GTR.

The protein belongs to the RNase PH family. As to quaternary structure, homohexameric ring arranged as a trimer of dimers.

The catalysed reaction is tRNA(n+1) + phosphate = tRNA(n) + a ribonucleoside 5'-diphosphate. In terms of biological role, phosphorolytic 3'-5' exoribonuclease that plays an important role in tRNA 3'-end maturation. Removes nucleotide residues following the 3'-CCA terminus of tRNAs; can also add nucleotides to the ends of RNA molecules by using nucleoside diphosphates as substrates, but this may not be physiologically important. Probably plays a role in initiation of 16S rRNA degradation (leading to ribosome degradation) during starvation. In Rhizobium rhizogenes (strain K84 / ATCC BAA-868) (Agrobacterium radiobacter), this protein is Ribonuclease PH.